We begin with the raw amino-acid sequence, 191 residues long: UPF0149 protein VS_2635 (191 aa).

The protein belongs to the UPF0149 family.

The protein is UPF0149 protein VS_2635 of Vibrio atlanticus (strain LGP32) (Vibrio splendidus (strain Mel32)).